A 742-amino-acid chain; its full sequence is uncharacterized protein (742 aa).

A disordered region spans residues 167–471; that stretch reads GIVPPEPWGH…AAGAAGGGGA (305 aa). Residues 205–218 show a composition bias toward pro residues; that stretch reads PAPPPSLFAPPPPS. Composition is skewed to polar residues over residues 318-331 and 358-368; these read SPAT…NAVS and GSPQTLSTAPS. Positions 386-401 are enriched in pro residues; the sequence is TAGPAAPPTTGGPPAP. The span at 421–432 shows a compositional bias: low complexity; it reads PLSGGVPGGAVP. Residues 433–447 show a composition bias toward pro residues; the sequence is LGPPPTPPPAAPVTT. The span at 448–464 shows a compositional bias: low complexity; sequence PPLASGAPVAPTGAAAG.

Its function is as follows. May be involved in the ESX-1 / type VII specialized secretion system (T7SS), which exports several proteins including EsxA and EsxB. Involved in DNA conjugation in the recipient strain. This is an uncharacterized protein from Mycolicibacterium smegmatis (strain MKD8) (Mycobacterium smegmatis).